We begin with the raw amino-acid sequence, 569 residues long: Proline--tRNA ligase (569 aa).

The protein belongs to the class-II aminoacyl-tRNA synthetase family. ProS type 1 subfamily. In terms of assembly, homodimer.

Its subcellular location is the cytoplasm. It catalyses the reaction tRNA(Pro) + L-proline + ATP = L-prolyl-tRNA(Pro) + AMP + diphosphate. Functionally, catalyzes the attachment of proline to tRNA(Pro) in a two-step reaction: proline is first activated by ATP to form Pro-AMP and then transferred to the acceptor end of tRNA(Pro). As ProRS can inadvertently accommodate and process non-cognate amino acids such as alanine and cysteine, to avoid such errors it has two additional distinct editing activities against alanine. One activity is designated as 'pretransfer' editing and involves the tRNA(Pro)-independent hydrolysis of activated Ala-AMP. The other activity is designated 'posttransfer' editing and involves deacylation of mischarged Ala-tRNA(Pro). The misacylated Cys-tRNA(Pro) is not edited by ProRS. The sequence is that of Proline--tRNA ligase from Levilactobacillus brevis (strain ATCC 367 / BCRC 12310 / CIP 105137 / JCM 1170 / LMG 11437 / NCIMB 947 / NCTC 947) (Lactobacillus brevis).